The chain runs to 150 residues: UPF0756 membrane protein A1S_2121 (150 aa).

4 consecutive transmembrane segments (helical) span residues 22–42 (SQNA…ITPL), 45–65 (FFPY…TIGV), 83–103 (FISF…WLGG), and 115–135 (VVAG…GVPV).

Belongs to the UPF0756 family.

The protein resides in the cell membrane. The polypeptide is UPF0756 membrane protein A1S_2121 (Acinetobacter baumannii (strain ATCC 17978 / DSM 105126 / CIP 53.77 / LMG 1025 / NCDC KC755 / 5377)).